The following is a 381-amino-acid chain: Sensor histidine kinase FlgS (381 aa).

In terms of domain architecture, Histidine kinase spans 177–381 (HLAHEIRNPV…TFEIKILNAS (205 aa)). The residue at position 180 (His-180) is a Phosphohistidine; by autocatalysis.

In terms of assembly, interacts (via its C-terminal kinase domain) with FlhA (via N-terminus). Autophosphorylated.

The enzyme catalyses ATP + protein L-histidine = ADP + protein N-phospho-L-histidine.. Functionally, member of the two-component regulatory system FlgR/FlgS that induces the transcriptional induction of the genes needed in motility and flagellar biogenesis. Also plays an essential role in bacterial survival at pH 2.5 independently of FlgR. Functions as a sensor protein kinase which is autophosphorylated at a histidine residue and transfers its phosphate group to the conserved aspartic acid residue in the regulatory domain of FlgR. In turn, FlgR functions as a transcriptional regulator initiating transcription from RpoN-dependent promoters. The chain is Sensor histidine kinase FlgS (flgS) from Helicobacter pylori (strain ATCC 700392 / 26695) (Campylobacter pylori).